A 100-amino-acid chain; its full sequence is MNLSPREKDKLLISMAAMVARRRLERGVKLNYPEAIALISDFVVEGARDGRAVADLMEAGAHVISRDQVMDGIADMIHDVQVEATFPDGTKLVTVHEPIR.

The protein belongs to the urease gamma subunit family. In terms of assembly, heterotrimer of UreA (gamma), UreB (beta) and UreC (alpha) subunits. Three heterotrimers associate to form the active enzyme.

The protein resides in the cytoplasm. The enzyme catalyses urea + 2 H2O + H(+) = hydrogencarbonate + 2 NH4(+). It participates in nitrogen metabolism; urea degradation; CO(2) and NH(3) from urea (urease route): step 1/1. This chain is Urease subunit gamma, found in Agrobacterium fabrum (strain C58 / ATCC 33970) (Agrobacterium tumefaciens (strain C58)).